A 105-amino-acid polypeptide reads, in one-letter code: Large ribosomal subunit protein bL21c (105 aa).

Belongs to the bacterial ribosomal protein bL21 family. In terms of assembly, part of the 50S ribosomal subunit.

The protein resides in the plastid. It is found in the chloroplast. In terms of biological role, this protein binds to 23S rRNA. The polypeptide is Large ribosomal subunit protein bL21c (Thalassiosira pseudonana (Marine diatom)).